Reading from the N-terminus, the 152-residue chain is UPF0756 membrane protein CA_C0092 (152 aa).

The next 4 membrane-spanning stretches (helical) occupy residues 5–25 (IILV…VAIS), 50–70 (MFWG…QGNV), 82–102 (FVGI…GVGL), and 117–137 (LILG…GPLI).

It belongs to the UPF0756 family.

The protein localises to the cell membrane. The protein is UPF0756 membrane protein CA_C0092 of Clostridium acetobutylicum (strain ATCC 824 / DSM 792 / JCM 1419 / IAM 19013 / LMG 5710 / NBRC 13948 / NRRL B-527 / VKM B-1787 / 2291 / W).